The following is a 139-amino-acid chain: Small ribosomal subunit protein uS12 (139 aa).

The residue at position 102 (aspartate 102) is a 3-methylthioaspartic acid. Positions 116-139 (DTTGVAKRSQGRSKYGAKRPKKSK) are disordered. Residues 124 to 139 (SQGRSKYGAKRPKKSK) are compositionally biased toward basic residues.

Belongs to the universal ribosomal protein uS12 family. As to quaternary structure, part of the 30S ribosomal subunit. Contacts proteins S8 and S17. May interact with IF1 in the 30S initiation complex.

In terms of biological role, with S4 and S5 plays an important role in translational accuracy. Interacts with and stabilizes bases of the 16S rRNA that are involved in tRNA selection in the A site and with the mRNA backbone. Located at the interface of the 30S and 50S subunits, it traverses the body of the 30S subunit contacting proteins on the other side and probably holding the rRNA structure together. The combined cluster of proteins S8, S12 and S17 appears to hold together the shoulder and platform of the 30S subunit. This chain is Small ribosomal subunit protein uS12, found in Mesomycoplasma hyopneumoniae (strain 7448) (Mycoplasma hyopneumoniae).